A 68-amino-acid polypeptide reads, in one-letter code: Small cysteine-rich protein 5 (68 aa).

The first 24 residues, 1–24 (MAVKFHLCLLLIILVGMGAHVAFA), serve as a signal peptide directing secretion.

Belongs to the Cnidaria small cysteine-rich protein (SCRiP) family. gamma subfamily. Contains 4 disulfide bonds.

It localises to the secreted. The protein resides in the nematocyst. Induces neurotoxic symptoms on zebrafish. Has also been claimed to be implied in calcification, but tests on homolog proteins suggest that proteins of this family have a neurotoxic function and not a calcification function. This Orbicella faveolata (Mountainous star coral) protein is Small cysteine-rich protein 5.